We begin with the raw amino-acid sequence, 147 residues long: UPF0208 membrane protein PM0703 (147 aa).

Transmembrane regions (helical) follow at residues 32 to 52 (VIKA…FAIT) and 65 to 85 (LAIA…GLYW).

The protein belongs to the UPF0208 family.

The protein resides in the cell inner membrane. The protein is UPF0208 membrane protein PM0703 of Pasteurella multocida (strain Pm70).